The following is a 245-amino-acid chain: Geranylgeranylglyceryl phosphate synthase (245 aa).

Residues D22 and S51 each contribute to the Mg(2+) site. Sn-glycerol 1-phosphate contacts are provided by residues 169-175 (YLEAGSG), 200-201 (GG), and 222-223 (GT).

It belongs to the GGGP/HepGP synthase family. Group II subfamily. Homopentamer. It depends on Mg(2+) as a cofactor.

The protein localises to the cytoplasm. The enzyme catalyses sn-glycerol 1-phosphate + (2E,6E,10E)-geranylgeranyl diphosphate = sn-3-O-(geranylgeranyl)glycerol 1-phosphate + diphosphate. It functions in the pathway membrane lipid metabolism; glycerophospholipid metabolism. Inhibited by EDTA in vitro. Its function is as follows. Prenyltransferase that catalyzes the transfer of the geranylgeranyl moiety of geranylgeranyl diphosphate (GGPP) to the C3 hydroxyl of sn-glycerol-1-phosphate (G1P). This reaction is the first ether-bond-formation step in the biosynthesis of archaeal membrane lipids. Cannot use sn-glycerol-3-phosphate (G3P) or dihydroxyacetonephosphate (DHAP) as substrate. This chain is Geranylgeranylglyceryl phosphate synthase, found in Methanothermobacter marburgensis (strain ATCC BAA-927 / DSM 2133 / JCM 14651 / NBRC 100331 / OCM 82 / Marburg) (Methanobacterium thermoautotrophicum).